Consider the following 762-residue polypeptide: PHD finger protein 20-like protein 1 (762 aa).

2 consecutive Tudor domains span residues 11–71 and 85–141; these read ITFE…LERP and VDFK…EDAK. Disordered regions lie at residues 178–231, 289–359, 383–411, 536–559, and 613–651; these read AKNK…TSSD, AEKK…CIKP, SVIN…RSQR, SLKL…EGTE, and LSGK…QHDY. The span at 193 to 211 shows a compositional bias: basic and acidic residues; it reads NKDKEERKWLKVPSKKEET. Polar residues-rich tracts occupy residues 319 to 340 and 383 to 398; these read DISS…SSGK and SVIN…NSPR. Positions 399–410 are enriched in basic residues; the sequence is SYKHSQRRRRSQ. The segment covering 614-632 has biased composition (basic and acidic residues); it reads SGKKKEKEKEKKEKKEKDH. The segment covering 633–647 has biased composition (basic residues); that stretch reads KSKQKKKKKKKKKSK.

It is found in the nucleus. In terms of biological role, is a negative regulator of proteasomal degradation of methylated proteins. Involved in the maintainance of pluripotency of embryonic stem cells. This Gallus gallus (Chicken) protein is PHD finger protein 20-like protein 1 (PHF20L1).